Here is an 89-residue protein sequence, read N- to C-terminus: Small ribosomal subunit protein bS20 (89 aa).

The interval Met-1–Lys-27 is disordered. Basic and acidic residues predominate over residues Ala-7–Arg-18.

This sequence belongs to the bacterial ribosomal protein bS20 family.

Functionally, binds directly to 16S ribosomal RNA. The polypeptide is Small ribosomal subunit protein bS20 (Buchnera aphidicola subsp. Schizaphis graminum (strain Sg)).